The primary structure comprises 215 residues: NAD(P)H-quinone oxidoreductase subunit I (215 aa).

4Fe-4S ferredoxin-type domains lie at 55-84 and 95-124; these read GRIHYEFDKCIACEVCVRVCPINLPVVDWV and RNYSIDFGVCIFCGNCVEYCPTNCLSMTEE. [4Fe-4S] cluster-binding residues include C64, C67, C70, C74, C104, C107, C110, and C114. The segment covering 169–180 has biased composition (basic and acidic residues); sequence MDPHGVASDRPR. The interval 169–215 is disordered; the sequence is MDPHGVASDRPRAGQLPAQVLETLTPPAKPTAKNDGQSSSEAKEGDA.

It belongs to the complex I 23 kDa subunit family. In terms of assembly, NDH-1 is composed of at least 11 different subunits. [4Fe-4S] cluster is required as a cofactor.

The protein resides in the cellular thylakoid membrane. It catalyses the reaction a plastoquinone + NADH + (n+1) H(+)(in) = a plastoquinol + NAD(+) + n H(+)(out). The enzyme catalyses a plastoquinone + NADPH + (n+1) H(+)(in) = a plastoquinol + NADP(+) + n H(+)(out). In terms of biological role, NDH-1 shuttles electrons from an unknown electron donor, via FMN and iron-sulfur (Fe-S) centers, to quinones in the respiratory and/or the photosynthetic chain. The immediate electron acceptor for the enzyme in this species is believed to be plastoquinone. Couples the redox reaction to proton translocation, and thus conserves the redox energy in a proton gradient. The protein is NAD(P)H-quinone oxidoreductase subunit I of Synechococcus sp. (strain CC9605).